Here is a 549-residue protein sequence, read N- to C-terminus: Elongator complex protein 3 (549 aa).

The region spanning 84 to 374 (RTASGIAVVA…YRVQRDIPMP (291 aa)) is the Radical SAM core domain. [4Fe-4S] cluster is bound by residues cysteine 101, cysteine 111, and cysteine 114. Acetyl-CoA-binding positions include lysine 166, 476–479 (ELHV), 499–501 (FGM), and tyrosine 532. In terms of domain architecture, N-acetyltransferase spans 398–549 (TECRDVRTRE…EGPYMVKKLD (152 aa)).

It belongs to the ELP3 family. In terms of assembly, component of the elongator complex. Interacts with transcriptional repressors snai1 and snai2; interaction with snai1 inhibits its ubiquitination and stabilizes it. Requires [4Fe-4S] cluster as cofactor.

Its subcellular location is the cytoplasm. It localises to the nucleus. It carries out the reaction uridine(34) in tRNA + acetyl-CoA + S-adenosyl-L-methionine + H2O = 5-(carboxymethyl)uridine(34) in tRNA + 5'-deoxyadenosine + L-methionine + CoA + 2 H(+). Its pathway is tRNA modification; 5-methoxycarbonylmethyl-2-thiouridine-tRNA biosynthesis. Functionally, catalytic tRNA acetyltransferase subunit of the elongator complex which is required for multiple tRNA modifications, including mcm5U (5-methoxycarbonylmethyl uridine), mcm5s2U (5-methoxycarbonylmethyl-2-thiouridine), and ncm5U (5-carbamoylmethyl uridine). In the elongator complex, acts as a tRNA uridine(34) acetyltransferase by mediating formation of carboxymethyluridine in the wobble base at position 34 in tRNAs. Stabilizes transcriptional repressor snai1 by inhibiting its ubiquitination which promotes neural crest cell migration. This is Elongator complex protein 3 from Xenopus tropicalis (Western clawed frog).